Reading from the N-terminus, the 156-residue chain is D-aminoacyl-tRNA deacylase (156 aa).

The short motif at 142–143 is the Gly-cisPro motif, important for rejection of L-amino acids element; that stretch reads GP.

The protein belongs to the DTD family. As to quaternary structure, homodimer.

It localises to the cytoplasm. It catalyses the reaction glycyl-tRNA(Ala) + H2O = tRNA(Ala) + glycine + H(+). The enzyme catalyses a D-aminoacyl-tRNA + H2O = a tRNA + a D-alpha-amino acid + H(+). Functionally, an aminoacyl-tRNA editing enzyme that deacylates mischarged D-aminoacyl-tRNAs. Also deacylates mischarged glycyl-tRNA(Ala), protecting cells against glycine mischarging by AlaRS. Acts via tRNA-based rather than protein-based catalysis; rejects L-amino acids rather than detecting D-amino acids in the active site. By recycling D-aminoacyl-tRNA to D-amino acids and free tRNA molecules, this enzyme counteracts the toxicity associated with the formation of D-aminoacyl-tRNA entities in vivo and helps enforce protein L-homochirality. The polypeptide is D-aminoacyl-tRNA deacylase (Delftia acidovorans (strain DSM 14801 / SPH-1)).